A 654-amino-acid chain; its full sequence is Probable replication restart protein PriA (654 aa).

Residues cysteine 367, cysteine 370, cysteine 376, cysteine 379, cysteine 395, cysteine 398, cysteine 407, and cysteine 410 each coordinate Zn(2+).

The protein belongs to the helicase family. PriA subfamily. In terms of assembly, component of the replication restart primosome. Zn(2+) serves as cofactor.

Initiates the restart of stalled replication forks, which reloads the replicative helicase on sites other than the origin of replication. Recognizes and binds to abandoned replication forks and remodels them to uncover a helicase loading site. Promotes assembly of the primosome at these replication forks. The chain is Probable replication restart protein PriA from Mycobacterium tuberculosis (strain CDC 1551 / Oshkosh).